We begin with the raw amino-acid sequence, 119 residues long: Holo-[acyl-carrier-protein] synthase (119 aa).

Positions 7 and 53 each coordinate Mg(2+).

The protein belongs to the P-Pant transferase superfamily. AcpS family. Mg(2+) is required as a cofactor.

Its subcellular location is the cytoplasm. It catalyses the reaction apo-[ACP] + CoA = holo-[ACP] + adenosine 3',5'-bisphosphate + H(+). In terms of biological role, transfers the 4'-phosphopantetheine moiety from coenzyme A to a Ser of acyl-carrier-protein. This chain is Holo-[acyl-carrier-protein] synthase, found in Dehalococcoides mccartyi (strain ATCC BAA-2266 / KCTC 15142 / 195) (Dehalococcoides ethenogenes (strain 195)).